A 390-amino-acid chain; its full sequence is Argininosuccinate synthase (390 aa).

6 to 14 (SYSGGLDTT) lines the ATP pocket. Tyr83 is an L-citrulline binding site. An ATP-binding site is contributed by Gly113. Residues Thr115, Asn119, and Asp120 each contribute to the L-aspartate site. Asn119 contacts L-citrulline. L-citrulline contacts are provided by Arg123, Ser169, Ser178, Glu254, and Tyr266.

The protein belongs to the argininosuccinate synthase family. Type 1 subfamily. As to quaternary structure, homotetramer.

Its subcellular location is the cytoplasm. It catalyses the reaction L-citrulline + L-aspartate + ATP = 2-(N(omega)-L-arginino)succinate + AMP + diphosphate + H(+). It functions in the pathway amino-acid biosynthesis; L-arginine biosynthesis; L-arginine from L-ornithine and carbamoyl phosphate: step 2/3. The polypeptide is Argininosuccinate synthase (Archaeoglobus fulgidus (strain ATCC 49558 / DSM 4304 / JCM 9628 / NBRC 100126 / VC-16)).